Reading from the N-terminus, the 287-residue chain is Inorganic pyrophosphatase (287 aa).

Arg-79 contributes to the diphosphate binding site. Mg(2+) contacts are provided by Asp-116, Asp-121, and Asp-153.

The protein belongs to the PPase family. It depends on Mg(2+) as a cofactor.

It is found in the cytoplasm. It carries out the reaction diphosphate + H2O = 2 phosphate + H(+). This chain is Inorganic pyrophosphatase (IPP1), found in Candida glabrata (strain ATCC 2001 / BCRC 20586 / JCM 3761 / NBRC 0622 / NRRL Y-65 / CBS 138) (Yeast).